A 142-amino-acid chain; its full sequence is Hemoglobin subunit alpha-A (142 aa).

The Globin domain occupies Val2 to Arg142. His59 lines the O2 pocket. Heme b is bound at residue His88.

It belongs to the globin family. In terms of assembly, heterotetramer of two alpha chains and two beta chains. Red blood cells.

Functionally, involved in oxygen transport from the lung to the various peripheral tissues. This chain is Hemoglobin subunit alpha-A (HBAA), found in Coturnix japonica (Japanese quail).